Reading from the N-terminus, the 300-residue chain is Actin-related protein 2/3 complex subunit 2-B (300 aa).

It belongs to the ARPC2 family. As to quaternary structure, component of the Arp2/3 complex composed of actr2/arp2, actr3/arp3, arpc1 (arpc1a or arpc1b), arpc2, arpc3, arpc4 and arpc5.

Its subcellular location is the cytoplasm. The protein localises to the cytoskeleton. The protein resides in the cell projection. It localises to the nucleus. Functionally, actin-binding component of the Arp2/3 complex, a multiprotein complex that mediates actin polymerization upon stimulation by nucleation-promoting factor (NPF). The Arp2/3 complex mediates the formation of branched actin networks in the cytoplasm, providing the force for cell motility. In addition to its role in the cytoplasmic cytoskeleton, the Arp2/3 complex also promotes actin polymerization in the nucleus, thereby regulating gene transcription and repair of damaged DNA. The Arp2/3 complex promotes homologous recombination (HR) repair in response to DNA damage by promoting nuclear actin polymerization, leading to drive motility of double-strand breaks (DSBs). The sequence is that of Actin-related protein 2/3 complex subunit 2-B (arpc2-b) from Xenopus laevis (African clawed frog).